The sequence spans 325 residues: Tetraacyldisaccharide 4'-kinase (325 aa).

Residue 55–62 (TAGGNGKT) coordinates ATP.

Belongs to the LpxK family.

It carries out the reaction a lipid A disaccharide + ATP = a lipid IVA + ADP + H(+). It functions in the pathway glycolipid biosynthesis; lipid IV(A) biosynthesis; lipid IV(A) from (3R)-3-hydroxytetradecanoyl-[acyl-carrier-protein] and UDP-N-acetyl-alpha-D-glucosamine: step 6/6. Functionally, transfers the gamma-phosphate of ATP to the 4'-position of a tetraacyldisaccharide 1-phosphate intermediate (termed DS-1-P) to form tetraacyldisaccharide 1,4'-bis-phosphate (lipid IVA). This is Tetraacyldisaccharide 4'-kinase from Salmonella paratyphi B (strain ATCC BAA-1250 / SPB7).